A 29-amino-acid polypeptide reads, in one-letter code: Cytochrome b6-f complex subunit 8 (29 aa).

The helical transmembrane segment at 3 to 23 (IISIGWVSLMVVFTFSISLVV) threads the bilayer.

Belongs to the PetN family. The 4 large subunits of the cytochrome b6-f complex are cytochrome b6, subunit IV (17 kDa polypeptide, PetD), cytochrome f and the Rieske protein, while the 4 small subunits are PetG, PetL, PetM and PetN. The complex functions as a dimer.

The protein resides in the plastid. The protein localises to the chloroplast thylakoid membrane. Functionally, component of the cytochrome b6-f complex, which mediates electron transfer between photosystem II (PSII) and photosystem I (PSI), cyclic electron flow around PSI, and state transitions. This is Cytochrome b6-f complex subunit 8 from Staurastrum punctulatum (Green alga).